Consider the following 371-residue polypeptide: Carnitine monooxygenase oxygenase subunit (371 aa).

The region spanning 44 to 152 (WICVAHSSEL…VEEYAGFLFI (109 aa)) is the Rieske domain. Residues cysteine 86, histidine 88, cysteine 106, and histidine 109 each contribute to the [2Fe-2S] cluster site. Residues histidine 208, histidine 213, and aspartate 323 each contribute to the Fe cation site.

This sequence belongs to the bacterial ring-hydroxylating dioxygenase alpha subunit family. CntA subfamily. As to quaternary structure, composed of an oxygenase subunit (cntA) and a reductase subunit (cntB). Requires [2Fe-2S] cluster as cofactor. It depends on Fe cation as a cofactor.

It carries out the reaction (R)-carnitine + NADH + O2 + H(+) = (3R)-3-hydroxy-4-oxobutanoate + trimethylamine + NAD(+) + H2O. It catalyses the reaction (R)-carnitine + NADPH + O2 + H(+) = (3R)-3-hydroxy-4-oxobutanoate + trimethylamine + NADP(+) + H2O. It functions in the pathway amine and polyamine metabolism; carnitine metabolism. Functionally, converts carnitine to trimethylamine and malic semialdehyde. This Acinetobacter baumannii (strain ATCC 19606 / DSM 30007 / JCM 6841 / CCUG 19606 / CIP 70.34 / NBRC 109757 / NCIMB 12457 / NCTC 12156 / 81) protein is Carnitine monooxygenase oxygenase subunit.